The following is a 693-amino-acid chain: Elongation factor G (693 aa).

A tr-type G domain is found at 8 to 282; sequence EKTRNIGIMA…AVIDYLPSPL (275 aa). Residues 17 to 24, 81 to 85, and 135 to 138 contribute to the GTP site; these read AHVDAGKT, DTPGH, and NKMD.

This sequence belongs to the TRAFAC class translation factor GTPase superfamily. Classic translation factor GTPase family. EF-G/EF-2 subfamily.

It localises to the cytoplasm. Its function is as follows. Catalyzes the GTP-dependent ribosomal translocation step during translation elongation. During this step, the ribosome changes from the pre-translocational (PRE) to the post-translocational (POST) state as the newly formed A-site-bound peptidyl-tRNA and P-site-bound deacylated tRNA move to the P and E sites, respectively. Catalyzes the coordinated movement of the two tRNA molecules, the mRNA and conformational changes in the ribosome. This Streptococcus pneumoniae (strain Hungary19A-6) protein is Elongation factor G.